We begin with the raw amino-acid sequence, 293 residues long: 4-hydroxy-tetrahydrodipicolinate synthase (293 aa).

Residue Thr-45 participates in pyruvate binding. The active-site Proton donor/acceptor is the Tyr-133. The active-site Schiff-base intermediate with substrate is the Lys-161. A pyruvate-binding site is contributed by Ile-203.

It belongs to the DapA family. In terms of assembly, homotetramer; dimer of dimers.

It localises to the cytoplasm. It catalyses the reaction L-aspartate 4-semialdehyde + pyruvate = (2S,4S)-4-hydroxy-2,3,4,5-tetrahydrodipicolinate + H2O + H(+). Its pathway is amino-acid biosynthesis; L-lysine biosynthesis via DAP pathway; (S)-tetrahydrodipicolinate from L-aspartate: step 3/4. Functionally, catalyzes the condensation of (S)-aspartate-beta-semialdehyde [(S)-ASA] and pyruvate to 4-hydroxy-tetrahydrodipicolinate (HTPA). This Aliivibrio salmonicida (strain LFI1238) (Vibrio salmonicida (strain LFI1238)) protein is 4-hydroxy-tetrahydrodipicolinate synthase.